A 91-amino-acid chain; its full sequence is Lipolysis-activating peptide 1-alpha chain (91 aa).

An N-terminal signal peptide occupies residues 1 to 21 (MNIKLFCFLSILISLTGLSLS). Residues 23 to 87 (DDGNYPIDAN…FFDAYKTYCK (65 aa)) enclose the LCN-type CS-alpha/beta domain. 3 disulfide bridges follow: Cys-38/Cys-61, Cys-47/Cys-66, and Cys-51/Cys-68.

It belongs to the long (3 C-C) scorpion toxin superfamily. As to quaternary structure, heterodimer of this alpha chain and a beta chain (AC D9U2A2). As to expression, expressed by the venom gland.

It is found in the secreted. Functionally, the heterodimer LVP1 induces lipolysis in rat adipocytes. Induction of lipolysis by LVP1 appears to be mediated through the beta-2 adrenergic receptor pathway (ADRB2). The polypeptide is Lipolysis-activating peptide 1-alpha chain (Lychas mucronatus (Chinese swimming scorpion)).